The chain runs to 342 residues: SWR1-complex protein 5 (342 aa).

Disordered regions lie at residues 1-126 (MAPT…PVTI), 142-178 (PRTSTAKPDESADPANCDIAKSSSQQPETAKAKDPDS), and 214-238 (LGENAPADGETAAEDESSSAKRMPR). Acidic residues-rich tracts occupy residues 8-20 (LAEDYASEEDSDF) and 33-43 (ISDDDDEEAGE). A compositionally biased stretch (basic residues) spans 78–87 (GEKRQKKTKT). Residues 260–341 (NLSMASRLQA…RRARMAQAGK (82 aa)) form the BCNT-C domain.

The protein belongs to the SWC5 family. As to quaternary structure, component of the SWR1 chromatin remodeling complex.

The protein resides in the nucleus. In terms of biological role, component of the SWR1 complex which mediates the ATP-dependent exchange of histone H2A for the H2A variant H2A.Z leading to transcriptional regulation of selected genes by chromatin remodeling. Involved in chromosome stability. The polypeptide is SWR1-complex protein 5 (crc-2) (Neurospora crassa (strain ATCC 24698 / 74-OR23-1A / CBS 708.71 / DSM 1257 / FGSC 987)).